Reading from the N-terminus, the 269-residue chain is Formamidopyrimidine-DNA glycosylase (269 aa).

P2 functions as the Schiff-base intermediate with DNA in the catalytic mechanism. E3 (proton donor) is an active-site residue. The Proton donor; for beta-elimination activity role is filled by K58. DNA-binding residues include H91, R110, and K150. The FPG-type zinc finger occupies 235 to 269 (SVYGCKNKKCYRCKGIIIKFVQNQRSTFYCKKCQT). The Proton donor; for delta-elimination activity role is filled by R259.

Belongs to the FPG family. In terms of assembly, monomer. It depends on Zn(2+) as a cofactor.

The catalysed reaction is Hydrolysis of DNA containing ring-opened 7-methylguanine residues, releasing 2,6-diamino-4-hydroxy-5-(N-methyl)formamidopyrimidine.. It carries out the reaction 2'-deoxyribonucleotide-(2'-deoxyribose 5'-phosphate)-2'-deoxyribonucleotide-DNA = a 3'-end 2'-deoxyribonucleotide-(2,3-dehydro-2,3-deoxyribose 5'-phosphate)-DNA + a 5'-end 5'-phospho-2'-deoxyribonucleoside-DNA + H(+). Functionally, involved in base excision repair of DNA damaged by oxidation or by mutagenic agents. Acts as a DNA glycosylase that recognizes and removes damaged bases. Has a preference for oxidized purines, such as 7,8-dihydro-8-oxoguanine (8-oxoG). Has AP (apurinic/apyrimidinic) lyase activity and introduces nicks in the DNA strand. Cleaves the DNA backbone by beta-delta elimination to generate a single-strand break at the site of the removed base with both 3'- and 5'-phosphates. This Vesicomyosocius okutanii subsp. Calyptogena okutanii (strain HA) protein is Formamidopyrimidine-DNA glycosylase.